We begin with the raw amino-acid sequence, 782 residues long: Probable transcription factor claV (782 aa).

5 disordered regions span residues 1–37 (MPPRPNKRQQREQEELESLGGPSHEGEVSSEDEVAKR), 49–128 (ALLT…GKDE), 156–180 (KSTSAGASGSSSRRKPGVLRSNLTH), 717–745 (AGVGAGADEDDEVEDDDEDEDEEVAPMPV), and 758–782 (GNTVAEDSSDDEGDRPPPVDDGGVD). A compositionally biased stretch (basic residues) spans 70–79 (RKTKKKKKKG). Positions 86–102 (QTPVMTEPPQSSRTSPN) are enriched in polar residues. Over residues 157 to 166 (STSAGASGSS) the composition is skewed to low complexity. Residues 723 to 740 (ADEDDEVEDDDEDEDEEV) are compositionally biased toward acidic residues.

The protein localises to the nucleus. It participates in secondary metabolite biosynthesis; terpenoid biosynthesis. Probable transcription factor; part of the gene cluster that mediates the biosynthesis of clavilactone A, a meroterpenoid that features a unique benzo-fused ten-membered carbocyclic ring unit with an alpha,beta-epoxy-gamma-lactone moiety, forming an intriguing 10/5/3 tricyclic nested skeleton. This chain is Probable transcription factor claV, found in Ampulloclitocybe clavipes (Club foot).